A 257-amino-acid chain; its full sequence is Phosphate import ATP-binding protein PstB (257 aa).

The ABC transporter domain occupies 11–252; the sequence is FNISRLYLYI…PKNELTEKYV (242 aa). 43-50 contributes to the ATP binding site; sequence GPSGSGKS.

It belongs to the ABC transporter superfamily. Phosphate importer (TC 3.A.1.7) family. In terms of assembly, the complex is composed of two ATP-binding proteins (PstB), two transmembrane proteins (PstC and PstA) and a solute-binding protein (PstS).

The protein localises to the cell membrane. It catalyses the reaction phosphate(out) + ATP + H2O = ADP + 2 phosphate(in) + H(+). Part of the ABC transporter complex PstSACB involved in phosphate import. Responsible for energy coupling to the transport system. The chain is Phosphate import ATP-binding protein PstB from Saccharolobus solfataricus (strain ATCC 35092 / DSM 1617 / JCM 11322 / P2) (Sulfolobus solfataricus).